The primary structure comprises 410 residues: Cysteine desulfurase IscS (410 aa).

Pyridoxal 5'-phosphate is bound by residues 80-81, N160, Q188, and 208-210; these read AT and SGH. At K211 the chain carries N6-(pyridoxal phosphate)lysine. Position 248 (T248) interacts with pyridoxal 5'-phosphate. The active-site Cysteine persulfide intermediate is the C334. C334 contacts [2Fe-2S] cluster.

It belongs to the class-V pyridoxal-phosphate-dependent aminotransferase family. NifS/IscS subfamily. Homodimer. Forms a heterotetramer with IscU, interacts with other sulfur acceptors. Pyridoxal 5'-phosphate is required as a cofactor.

It is found in the cytoplasm. It catalyses the reaction (sulfur carrier)-H + L-cysteine = (sulfur carrier)-SH + L-alanine. The protein operates within cofactor biosynthesis; iron-sulfur cluster biosynthesis. Its function is as follows. Master enzyme that delivers sulfur to a number of partners involved in Fe-S cluster assembly, tRNA modification or cofactor biosynthesis. Catalyzes the removal of elemental sulfur atoms from cysteine to produce alanine. Functions as a sulfur delivery protein for Fe-S cluster synthesis onto IscU, an Fe-S scaffold assembly protein, as well as other S acceptor proteins. This Rickettsia peacockii (strain Rustic) protein is Cysteine desulfurase IscS.